Consider the following 591-residue polypeptide: ESX-1 secretion system protein EccCb1 (591 aa).

2 consecutive FtsK domains span residues 65 to 259 (LQDV…NETQ) and 359 to 545 (LTPA…EKQE). ATP is bound by residues 84 to 91 (GAPQTGKS) and 376 to 383 (GAAKSGKT).

As to quaternary structure, part of the ESX-1 / type VII secretion system (T7SS), which is composed of cytosolic and membrane components. The ESX-1 membrane complex is composed of EccB1, EccCa1, EccCb1, EccD1 and EccE1. Interacts with EccCa1, EspK and the C-terminus of EsxB. Residues 1-261 interact with EsxB and an artificial EsxB-EsxA heterodimer.

The protein localises to the cytoplasm. With respect to regulation, esxB binding to the second FtsK domain of EccCb1 causes multimerization; a subsequent unknown step relieves the allosteric inhibition of linker 2 on FtsK domain 1 (in EccCa1 subunit), activating the ATPase activity. In terms of biological role, part of the ESX-1 specialized secretion system, which delivers several virulence factors to host cells during infection, including the key virulence factors EsxA (ESAT-6) and EsxB (CFP-10). EccCb1 may link the cytosolic components of the system with the membrane components. This chain is ESX-1 secretion system protein EccCb1, found in Mycobacterium tuberculosis (strain ATCC 25618 / H37Rv).